We begin with the raw amino-acid sequence, 193 residues long: Acyl carrier protein phosphodiesterase (193 aa).

This sequence belongs to the AcpH family.

The catalysed reaction is holo-[ACP] + H2O = apo-[ACP] + (R)-4'-phosphopantetheine + H(+). Its function is as follows. Converts holo-ACP to apo-ACP by hydrolytic cleavage of the phosphopantetheine prosthetic group from ACP. In Yersinia pestis, this protein is Acyl carrier protein phosphodiesterase.